The following is a 643-amino-acid chain: Threonine--tRNA ligase (643 aa).

Residues 1–61 enclose the TGS domain; it reads MPIITLPDGS…SEDSSLEIIT (61 aa). Residues 243–534 form a catalytic region; that stretch reads DHRRIGKALD…ITEEYAGFFP (292 aa). 3 residues coordinate Zn(2+): cysteine 334, histidine 385, and histidine 511.

Belongs to the class-II aminoacyl-tRNA synthetase family. Homodimer. Zn(2+) serves as cofactor.

It localises to the cytoplasm. It catalyses the reaction tRNA(Thr) + L-threonine + ATP = L-threonyl-tRNA(Thr) + AMP + diphosphate + H(+). In terms of biological role, catalyzes the attachment of threonine to tRNA(Thr) in a two-step reaction: L-threonine is first activated by ATP to form Thr-AMP and then transferred to the acceptor end of tRNA(Thr). Also edits incorrectly charged L-seryl-tRNA(Thr). The polypeptide is Threonine--tRNA ligase (Actinobacillus pleuropneumoniae serotype 7 (strain AP76)).